The following is a 565-amino-acid chain: MSANAGGSGSVDCGGSSSSSQTSCGPESSGSELTPATPAPRLLQGLLGSDDEEQEDPKDYCKGGYYPVKIGDLFNGRYHVVRKLGWGHFSTVWLCWDIQRKRFVALKVVKSAGHYTETAVDEIKLLKCVRDSDPSDPKRETIVQLIDDFRISGVNGVHVCMVLEVLGHQLLKWIIKSNYQGLPVPCVKSIVRQVLHGLDYLHTKCKIIHTDIKPENILLCVGDAYIRRLAAEATEWQQSGAQPPSRSTVSTAPQEVLIGKLSKNKRKKMRRKRKQQKRLLEERLRDLQRLEAMEAAVQAEDSSSRLERGSGSTSSSGCHPEGTRAGPSPASSSPVPGGERSLSPSSQTSGFSGSLFSTASCSILSGSSNQRETGGLLSPSTPFGASNLLVNPLEPQNADKIKIKIADLGNACWVHKHFTEDIQTRQYRAVEVLIGAEYGPPADIWSTACMAFELATGDYLFEPHSGEDYSRDEDHIAHIVELLGDIPPAFALSGRYSREFFNRRGELRHIPNLKHWGLYEVLMEKYEWPLEQATQFSAFLLPMMEYIPEKRASAADCLQHPWLNP.

A disordered region spans residues 1–44 (MSANAGGSGSVDCGGSSSSSQTSCGPESSGSELTPATPAPRLLQ). Residues 10-31 (SVDCGGSSSSSQTSCGPESSGS) are compositionally biased toward low complexity. Residue Ser49 is modified to Phosphoserine. A Protein kinase domain is found at 78 to 563 (YHVVRKLGWG…AADCLQHPWL (486 aa)). Residues 84 to 92 (LGWGHFSTV) and Lys107 each bind ATP. The active-site Proton acceptor is the Asp211. Over residues 236 to 253 (WQQSGAQPPSRSTVSTAP) the composition is skewed to polar residues. 2 disordered regions span residues 236-280 (WQQS…KRLL) and 295-350 (AAVQ…QTSG). A compositionally biased stretch (basic residues) spans 262-277 (SKNKRKKMRRKRKQQK). Over residues 325–350 (AGPSPASSSPVPGGERSLSPSSQTSG) the composition is skewed to low complexity. At Ser328 the chain carries Phosphoserine.

Belongs to the protein kinase superfamily. CMGC Ser/Thr protein kinase family. Exclusively expressed in skeletal and heart muscle.

It localises to the nucleus. Its subcellular location is the cytoplasm. The catalysed reaction is L-seryl-[protein] + ATP = O-phospho-L-seryl-[protein] + ADP + H(+). It catalyses the reaction L-threonyl-[protein] + ATP = O-phospho-L-threonyl-[protein] + ADP + H(+). Its function is as follows. Serine/arginine-rich protein-specific kinase which specifically phosphorylates its substrates at serine residues located in regions rich in arginine/serine dipeptides, known as RS domains. Phosphorylates the SR splicing factor SRSF1 and the lamin-B receptor (LBR) in vitro. Required for normal muscle development. The protein is SRSF protein kinase 3 (Srpk3) of Mus musculus (Mouse).